We begin with the raw amino-acid sequence, 281 residues long: N-methyltransferase tcpN (281 aa).

This sequence belongs to the methyltransferase superfamily. LaeA methyltransferase family.

It functions in the pathway secondary metabolite biosynthesis. Functionally, N-methyltransferase; part of the gene cluster that mediates the biosynthesis of an unusual class of epipolythiodioxopiperazines (ETPs) lacking the reactive thiol group important for toxicity. Firstly, L-tyrosine is prenylated by tcpD, before undergoing condensation with L-glycine in a reaction catalyzed by the NRPS tcpP leading to the diketopiperazine (DKP) backbone. Afterwards the alpha-carbon of tyrosine is oxidized by the cytochrome P450 tcpC to form a hydroxyl group. However, in contrast other ETP biosynthesis pathways studied so far, tcpC is not able to bishydroxylate the DKP at both alpha-carbon positions, but hydroxylates the alpha-carbon of the tyrosine part and the nitrogen of the glycine part. The next steps involve an alpha,beta-elimination reaction catalyzed by tcpI, a methylation by the methyltransferase tcpN the action of the four enzyme cascade tcpG/K/J/I. Due to a dysfunctional cytochrome P450 monooxygenase tcpC, the pathway leads to the biosynthesis of probable non-toxic metabolites lacking the reactive thiol group. This chain is N-methyltransferase tcpN, found in Claviceps purpurea (strain 20.1) (Ergot fungus).